The chain runs to 662 residues: MRGAGPSPRQSPRTLRPDPGPAMSFFRRKVKGKEQEKTSDVKSIKASISVHSPQKSTKNHALLEAAGPSHVAINAISANMDSFSSSRTATLKKQPSHMEAAHFGDLGRSCLDYQTQETKSSLSKTLEQVLHDTIVLPYFIQFMELRRMEHLVKFWLEAESFHSTTWSRIRAHSLNTVKQSSLAEPVSPSKKHETTASFLTDSLDKRLEDSGSAQLFMTHSEGIDLNNRTNSTQNHLLLSQECDSAHSLRLEMARAGTHQVSMETQESSSTLTVASRNSPASPLKELSGKLMKSIEQDAVNTFTKYISPDAAKPIPITEAMRNDIIARICGEDGQVDPNCFVLAQSIVFSAMEQEHFSEFLRSHHFCKYQIEVLTSGTVYLADILFCESALFYFSEYMEKEDAVNILQFWLAADNFQSQLAAKKGQYDGQEAQNDAMILYDKYFSLQATHPLGFDDVVRLEIESNICREGGPLPNCFTTPLRQAWTTMEKVFLPGFLSSNLYYKYLNDLIHSVRGDEFLGGNVSLTAPGSVGPPDESHPGSSDSSASQSSVKKASIKILKNFDEAIIVDAASLDPESLYQRTYAGKMTFGRVSDLGQFIRESEPEPDVRKSKGSMFSQAMKKWVQGNTDEAQEELAWKIAKMIVSDIMQQAQYDQPLEKSTKL.

The transit peptide at 1-28 directs the protein to the mitochondrion; it reads MRGAGPSPRQSPRTLRPDPGPAMSFFRR. Residues 1-55 are disordered; the sequence is MRGAGPSPRQSPRTLRPDPGPAMSFFRRKVKGKEQEKTSDVKSIKASISVHSPQK. Over residues 32 to 43 the composition is skewed to basic and acidic residues; that stretch reads GKEQEKTSDVKS. 2 positions are modified to phosphoserine: Ser52 and Ser189. 2 RGS domains span residues 125–369 and 379–505; these read TLEQ…CKYQ and YLAD…YKYL. Residues 261-280 show a composition bias toward polar residues; sequence SMETQESSSTLTVASRNSPA. A disordered region spans residues 261 to 282; that stretch reads SMETQESSSTLTVASRNSPASP. Ser281 is modified (phosphoserine). The disordered stretch occupies residues 524–548; sequence LTAPGSVGPPDESHPGSSDSSASQS. Positions 634 to 647 are PKA-RII subunit binding; that stretch reads LAWKIAKMIVSDIM.

It localises to the mitochondrion. It is found in the membrane. The protein resides in the cytoplasm. Functionally, differentially targeted protein that binds to type I and II regulatory subunits of protein kinase A and anchors them to the mitochondria or the plasma membrane. Although the physiological relevance between PKA and AKAPS with mitochondria is not fully understood, one idea is that BAD, a proapoptotic member, is phosphorylated and inactivated by mitochondria-anchored PKA. It cannot be excluded too that it may facilitate PKA as well as G protein signal transduction, by acting as an adapter for assembling multiprotein complexes. With its RGS domain, it could lead to the interaction to G-alpha proteins, providing a link between the signaling machinery and the downstream kinase. This is A-kinase anchor protein 10, mitochondrial (AKAP10) from Homo sapiens (Human).